The chain runs to 65 residues: Putative beta-neurotoxin RjAa12 (65 aa).

The LCN-type CS-alpha/beta domain maps to 1–64 (KEGYPVGRDG…VWDSSTNKCG (64 aa)). 4 disulfide bridges follow: Cys11–Cys63, Cys15–Cys37, Cys22–Cys44, and Cys26–Cys46.

The protein belongs to the long (4 C-C) scorpion toxin superfamily. Sodium channel inhibitor family. Beta subfamily. Expressed by the venom gland.

Its subcellular location is the secreted. Beta toxins bind voltage-independently at site-4 of sodium channels (Nav) and shift the voltage of activation toward more negative potentials thereby affecting sodium channel activation and promoting spontaneous and repetitive firing. In Rhopalurus junceus (Caribbean blue scorpion), this protein is Putative beta-neurotoxin RjAa12.